Here is a 582-residue protein sequence, read N- to C-terminus: Calcium-dependent protein kinase 24 (582 aa).

The interval 1–36 (MGSCVSSPLKGSPFGKRPVRRRHSSNSRTSSVPRFD) is disordered. Gly-2 is lipidated: N-myristoyl glycine. The Protein kinase domain maps to 66–324 (YDLGKELGRG…VQEVLEHPWI (259 aa)). ATP contacts are provided by residues 72-80 (LGRGEFGVT) and Lys-95. The Proton acceptor role is filled by Asp-190. The residue at position 230 (Ser-230) is a Phosphoserine. The interval 330–360 (APNVNLGDNVRTKIQQFLLMNRFKKKVLRIV) is autoinhibitory domain. 4 consecutive EF-hand domains span residues 367–402 (EEIA…IGQV), 403–438 (VPDG…LKRM), 439–474 (GCDE…DKLG), and 478–513 (GNDQ…GTDW). 18 residues coordinate Ca(2+): Asp-380, Asp-382, Asn-384, His-386, Glu-391, Asp-416, Asp-418, Asn-420, Met-422, Glu-427, Asp-452, Asn-454, Asn-456, Glu-463, Asp-491, Asn-493, Asp-495, and Arg-497. Ser-499 bears the Phosphoserine mark. Position 502 (Glu-502) interacts with Ca(2+).

The protein belongs to the protein kinase superfamily. Ser/Thr protein kinase family. CDPK subfamily.

The protein localises to the membrane. The catalysed reaction is L-seryl-[protein] + ATP = O-phospho-L-seryl-[protein] + ADP + H(+). It carries out the reaction L-threonyl-[protein] + ATP = O-phospho-L-threonyl-[protein] + ADP + H(+). With respect to regulation, activated by calcium. Autophosphorylation may play an important role in the regulation of the kinase activity. May play a role in signal transduction pathways that involve calcium as a second messenger. In Arabidopsis thaliana (Mouse-ear cress), this protein is Calcium-dependent protein kinase 24 (CPK24).